A 174-amino-acid chain; its full sequence is MTGLNTAGSDRDYDTQSLNRELQDKGFLLTTTEDLINWARTGSLHWMTFGLACCAVEMMHTSMPRYDVERFGVAPRASPRQSDVMIVAGTLTNKMAPALRKVYDQMPEPRYVISMGSCANGGGYYHYSYSVVRGCDRIVPVDIYVPGCPPTAEALLYGILQLQRKIRRTGTITR.

[4Fe-4S] cluster contacts are provided by cysteine 53, cysteine 54, cysteine 118, and cysteine 148.

This sequence belongs to the complex I 20 kDa subunit family. NDH-1 is composed of 14 different subunits. Subunits NuoB, C, D, E, F, and G constitute the peripheral sector of the complex. [4Fe-4S] cluster is required as a cofactor.

The protein resides in the cell inner membrane. The catalysed reaction is a quinone + NADH + 5 H(+)(in) = a quinol + NAD(+) + 4 H(+)(out). In terms of biological role, NDH-1 shuttles electrons from NADH, via FMN and iron-sulfur (Fe-S) centers, to quinones in the respiratory chain. The immediate electron acceptor for the enzyme in this species is believed to be ubiquinone. Couples the redox reaction to proton translocation (for every two electrons transferred, four hydrogen ions are translocated across the cytoplasmic membrane), and thus conserves the redox energy in a proton gradient. The sequence is that of NADH-quinone oxidoreductase subunit B 1 from Cereibacter sphaeroides (strain KD131 / KCTC 12085) (Rhodobacter sphaeroides).